Consider the following 111-residue polypeptide: Universal stress protein B (111 aa).

2 consecutive transmembrane segments (helical) span residues 1-21 (MIST…NMAR) and 90-110 (FILT…LLIW).

Belongs to the universal stress protein B family.

It localises to the cell inner membrane. This chain is Universal stress protein B, found in Enterobacter sp. (strain 638).